The chain runs to 356 residues: Protein ATP1B4 (356 aa).

At 1-109 (MRRQLRSRRA…SLARTGQSRS (109 aa)) the chain is on the nuclear side. The tract at residues 32–77 (LADEEEEAEEEAQVMMVPGLEEEEEEEEGKEEEEEREEEEGQGQST) is disordered. Acidic residues-rich tracts occupy residues 33–43 (ADEEEEAEEEA) and 51–72 (LEEE…EEEG). Residues 110-130 (LILVIYFFFYASLAAVITLFI) traverse the membrane as a helical; Signal-anchor for type II membrane protein segment. The Perinuclear space portion of the chain corresponds to 131–356 (YMLFLAISPY…RIIFTLNIET (226 aa)).

It belongs to the X(+)/potassium ATPases subunit beta family. Does not associate with known Na,K-ATPase alpha-subunits. Associates with a SMAD7-transcriptional complex. Interacts with SNW1 and TOR1AIP1. In terms of tissue distribution, expressed in perinatal myocytes (at protein level). Expressed during postnatal development in skeletal muscle and heart.

It is found in the nucleus inner membrane. May act as a transcriptional coregulator during muscle development through its interaction with SNW1. Has lost its ancestral function as a Na,K-ATPase beta-subunit. The polypeptide is Protein ATP1B4 (Atp1b4) (Rattus norvegicus (Rat)).